Consider the following 289-residue polypeptide: Borealin (289 aa).

A required for interaction with INCENP region spans residues 1 to 58; the sequence is MAPKKRSSRGTRTNTLRSRKLASFLKDFDREVQVRTKQIESDRQTLLKEVENLYNIEI. The required for centromere localization stretch occupies residues 1-88; sequence MAPKKRSSRG…NKQALEEAAK (88 aa). Residues 1–150 form a required for interaction with SENP3 region; the sequence is MAPKKRSSRG…KKSHKNLRSA (150 aa). Residues 10-109 are required to form a minimal CPC core complex that localizes to the central spindle and midbody and properly executes the role of the CPC during cytokinesis; the sequence is GTRTNTLRSR…TAEAIQTPLK (100 aa). The required for interaction with INCENP and BIRC5 stretch occupies residues 20-78; sequence KLASFLKDFDREVQVRTKQIESDRQTLLKEVENLYNIEILRLPKALQGMKWLDYFALGG. Arg-91 is subject to Citrulline. A Phosphothreonine; by TTK modification is found at Thr-94. At Thr-106 the chain carries Phosphothreonine. Residue Ser-110 is modified to Phosphoserine. The disordered stretch occupies residues 122 to 173; that stretch reads SIKEEEEEEEEGGGGGGRTKKSHKNLRSAKVKRCLPSKKRTQSIQGRGRSKR. Residues 123–133 show a composition bias toward acidic residues; that stretch reads IKEEEEEEEEG. The segment covering 139–162 has biased composition (basic residues); it reads RTKKSHKNLRSAKVKRCLPSKKRT. Residue Lys-145 forms a Glycyl lysine isopeptide (Lys-Gly) (interchain with G-Cter in SUMO2) linkage. The residue at position 175 (Ser-175) is a Phosphoserine. 2 positions are modified to phosphothreonine: Thr-198 and Thr-213. 4 positions are modified to phosphoserine: Ser-228, Ser-233, Ser-247, and Ser-253.

The protein belongs to the borealin family. In terms of assembly, may form homooligomers and homodimers. Component of the chromosomal passenger complex (CPC) composed of at least BIRC5/survivin, CDCA8/borealin, INCENP, AURKB or AURKC; in the complex forms a triple-helix bundle-based subcomplex with INCENP and BIRC5. Interacts with SENP3, UBE2I and RANBP2. Interacts (phosphorylated) with SGO1 and SGO2A; the association is dependent on CDK1. Post-translationally, phosphorylated by TTK, essentially at Thr-94. Phosphorylation (probably by CDK1) promotes targeting of the CPC to centromeric DNA. In terms of processing, sumoylated by UBE2I and RANBP2. Desumoylated by SENP3 through the removal of SUMO2 and SUMO3. Citrullinated by PADI4.

The protein resides in the nucleus. It localises to the nucleolus. Its subcellular location is the cytoplasm. The protein localises to the chromosome. It is found in the centromere. The protein resides in the cytoskeleton. It localises to the spindle. Its function is as follows. Component of the chromosomal passenger complex (CPC), a complex that acts as a key regulator of mitosis. The CPC complex has essential functions at the centromere in ensuring correct chromosome alignment and segregation and is required for chromatin-induced microtubule stabilization and spindle assembly. In the complex, it may be required to direct the CPC to centromeric DNA. Major effector of the TTK kinase in the control of attachment-error-correction and chromosome alignment. The sequence is that of Borealin (Cdca8) from Mus musculus (Mouse).